The chain runs to 217 residues: Cytochrome c biogenesis ATP-binding export protein CcmA (217 aa).

The region spanning 6-215 (FSAKNLACVR…HLDQFAVAEE (210 aa)) is the ABC transporter domain. Residue 38–45 (GPNGSGKS) coordinates ATP.

Belongs to the ABC transporter superfamily. CcmA exporter (TC 3.A.1.107) family. The complex is composed of two ATP-binding proteins (CcmA) and two transmembrane proteins (CcmB).

It localises to the cell inner membrane. It carries out the reaction heme b(in) + ATP + H2O = heme b(out) + ADP + phosphate + H(+). Part of the ABC transporter complex CcmAB involved in the biogenesis of c-type cytochromes; once thought to export heme, this seems not to be the case, but its exact role is uncertain. Responsible for energy coupling to the transport system. This Paramagnetospirillum magneticum (strain ATCC 700264 / AMB-1) (Magnetospirillum magneticum) protein is Cytochrome c biogenesis ATP-binding export protein CcmA.